We begin with the raw amino-acid sequence, 338 residues long: Fructose-1,6-bisphosphatase class 1 (338 aa).

Glu-94, Asp-116, Leu-118, and Asp-119 together coordinate Mg(2+). Substrate contacts are provided by residues 119–122 (DGSS), Asn-210, and Lys-276. Residue Glu-282 participates in Mg(2+) binding.

Belongs to the FBPase class 1 family. Homotetramer. The cofactor is Mg(2+).

The protein resides in the cytoplasm. The enzyme catalyses beta-D-fructose 1,6-bisphosphate + H2O = beta-D-fructose 6-phosphate + phosphate. It participates in carbohydrate biosynthesis; gluconeogenesis. The polypeptide is Fructose-1,6-bisphosphatase class 1 (Burkholderia thailandensis (strain ATCC 700388 / DSM 13276 / CCUG 48851 / CIP 106301 / E264)).